A 191-amino-acid chain; its full sequence is Cyclin-dependent kinase inhibitor 1 (191 aa).

Positions 62–81 (LIHLEEEDKDGDTETSTYRR) are disordered. The segment at 162 to 191 (QLKEKFKKKYNFDFEKEKPLEGRYEWVKLE) is required for inhibitory function and interaction with CDK kinase complexes.

Belongs to the CDI family. ICK/KRP subfamily. In terms of assembly, specifically interacts with CDKA-1, but not with CDKB1-1. Interacts with CYCD2-1 and CYCD3-1. Ubiquitinated independently by RKP and SCF (SKP1-CUL1-FBL5/SKP2B) protein ligase complex, leading to proteasomal degradation. In terms of tissue distribution, expressed at low levels in roots, stems, leaves and flowers.

It is found in the nucleus. The protein localises to the nucleoplasm. Binds and inhibits CYCD2-1/CDKA-1 kinase complex activity. Regulates cell division which is crucial for plant growth, development and morphogenesis. Functions in turning cells from a mitotic to an endoreplicating cell cycle mode. Acts cell- and non-cell-autonomously to regulate endoreduplication by allowing S phase progression, but blocking entry into mitosis. Keeps on the one hand the plant cell cycle locally controlled, and on the other hand provides a possibility of linking cell cycle control in single cells with the supracellular organization of a tissue or an organ. May target specifically CDKA-1. This Arabidopsis thaliana (Mouse-ear cress) protein is Cyclin-dependent kinase inhibitor 1 (KRP1).